The chain runs to 161 residues: Non-secretory ribonuclease (161 aa).

An N-terminal signal peptide occupies residues 1-27; it reads MVPKLFTSQICLLLLLGLLAVEGSLHV. Trp-34 carries a C-linked (Man) tryptophan glycan. His-42 serves as the catalytic Proton acceptor. N-linked (GlcNAc...) asparagine glycosylation is present at Asn-44. 4 cysteine pairs are disulfide-bonded: Cys-50-Cys-110, Cys-64-Cys-123, Cys-82-Cys-138, and Cys-89-Cys-98. The residue at position 60 (Tyr-60) is a 3'-nitrotyrosine. 65 to 69 serves as a coordination point for substrate; the sequence is KNQNT. Asn-86, Asn-92, Asn-111, and Asn-119 each carry an N-linked (GlcNAc...) asparagine glycan. The active-site Proton donor is His-156.

It belongs to the pancreatic ribonuclease family. Interacts with and forms a tight 1:1 complex with RNH1. Dimerization of two such complexes may occur.

Its subcellular location is the lysosome. The protein localises to the cytoplasmic granule. It carries out the reaction an [RNA] containing cytidine + H2O = an [RNA]-3'-cytidine-3'-phosphate + a 5'-hydroxy-ribonucleotide-3'-[RNA].. It catalyses the reaction an [RNA] containing uridine + H2O = an [RNA]-3'-uridine-3'-phosphate + a 5'-hydroxy-ribonucleotide-3'-[RNA].. In terms of biological role, this is a non-secretory ribonuclease. It is a pyrimidine specific nuclease with a slight preference for U. Cytotoxin and helminthotoxin. Possesses a wide variety of biological activities. The protein is Non-secretory ribonuclease (RNASE2) of Gorilla gorilla gorilla (Western lowland gorilla).